Here is a 154-residue protein sequence, read N- to C-terminus: uncharacterized protein (154 aa).

Helical transmembrane passes span 15–37 (DFSF…ALIT), 58–80 (FAAM…WLWG), 95–116 (LGAL…FAFT), and 123–145 (LVIS…FVPH).

It localises to the cell membrane. This is an uncharacterized protein from Archaeoglobus fulgidus (strain ATCC 49558 / DSM 4304 / JCM 9628 / NBRC 100126 / VC-16).